The following is a 301-amino-acid chain: Putative S-adenosyl-L-methionine-dependent methyltransferase MMAR_4850 (301 aa).

Residues Asp-127 and 156–157 (DL) each bind S-adenosyl-L-methionine.

It belongs to the UPF0677 family.

Exhibits S-adenosyl-L-methionine-dependent methyltransferase activity. This is Putative S-adenosyl-L-methionine-dependent methyltransferase MMAR_4850 from Mycobacterium marinum (strain ATCC BAA-535 / M).